A 348-amino-acid chain; its full sequence is Malyl-CoA/beta-methylmalyl-CoA/citramalyl-CoA lyase (348 aa).

Residues 32–33 (HF), lysine 40, and arginine 92 each bind substrate. Residues glutamate 157 and aspartate 184 each coordinate Mg(2+). Substrate is bound by residues 183–184 (AD) and leucine 274.

Belongs to the HpcH/HpaI aldolase family. As to quaternary structure, homohexamer. Dimer of trimers. Mg(2+) serves as cofactor. It depends on Mn(2+) as a cofactor.

It carries out the reaction (S)-malyl-CoA = glyoxylate + acetyl-CoA. It catalyses the reaction (2R,3S)-beta-methylmalyl-CoA = propanoyl-CoA + glyoxylate. The enzyme catalyses (3S)-citramalyl-CoA = pyruvate + acetyl-CoA. Its activity is regulated as follows. Inhibited by oxalate. Involved in the 3-hydroxypropionate cycle used for autotrophic carbon dioxide fixation, and in the glyoxylate assimilation cycle used to regenerate acetyl-CoA and produce pyruvate as universal precursor for biosynthesis. As a part of the 3-hydroxypropionate cycle, it catalyzes the cleavage of (S)-malyl-CoA to yield acetyl-CoA and glyoxylate. As part of the glyoxylate assimilation cycle, it catalyzes the condensation of glyoxylate with propionyl-CoA to yield (2R,3S)-beta-methylmalyl-CoA, and catalyzes the cleavage of (S)-citramalyl-CoA to yield acetyl-CoA and pyruvate. The chain is Malyl-CoA/beta-methylmalyl-CoA/citramalyl-CoA lyase (mcl) from Chloroflexus aurantiacus.